The following is a 420-amino-acid chain: MHDLKALRADPAAFDAALARRGLSPVGQQLVSDDEGRRAALAALQEAQGARKALAKEIGLLKRQKLDTAEIEAKAVALRDQIAGLEERANTIQTRIDDVLKSLPNCLDASVPDGKGEDENVVVHVRGEKREFAFEAKQHFELGEALGLMDFPTAAKLSGTRFVVLRGALARLERALGQFMLDTHTTEFGYSETSVPLLVNDDAMYGTDKLPKFAEDSFRTEDGRWLIPTAEVPLTASVMGEILPADALPIRMTALSQCFRSEAGSAGRDVRGMLRQHQFTKCELVSVVKPEDSDAEHERMTQAAETVLERLGITFRRMLLCAGDTGFGAAKTFDLEAWLPGQKAWREISSCSNTRDFQARRMNARYRAENGPAFVNTLNGSGLAVGRTMIAVMETYQNEDGSIDIPEVLRPYMGGLNRIG.

229–231 (TAE) lines the L-serine pocket. Residue 260 to 262 (RSE) participates in ATP binding. Glutamate 283 contacts L-serine. Residue 347–350 (EISS) coordinates ATP. Serine 381 contributes to the L-serine binding site.

Belongs to the class-II aminoacyl-tRNA synthetase family. Type-1 seryl-tRNA synthetase subfamily. In terms of assembly, homodimer. The tRNA molecule binds across the dimer.

The protein resides in the cytoplasm. It catalyses the reaction tRNA(Ser) + L-serine + ATP = L-seryl-tRNA(Ser) + AMP + diphosphate + H(+). The catalysed reaction is tRNA(Sec) + L-serine + ATP = L-seryl-tRNA(Sec) + AMP + diphosphate + H(+). It functions in the pathway aminoacyl-tRNA biosynthesis; selenocysteinyl-tRNA(Sec) biosynthesis; L-seryl-tRNA(Sec) from L-serine and tRNA(Sec): step 1/1. Functionally, catalyzes the attachment of serine to tRNA(Ser). Is also able to aminoacylate tRNA(Sec) with serine, to form the misacylated tRNA L-seryl-tRNA(Sec), which will be further converted into selenocysteinyl-tRNA(Sec). The chain is Serine--tRNA ligase from Gluconobacter oxydans (strain 621H) (Gluconobacter suboxydans).